The following is a 196-amino-acid chain: Probable cobalt-precorrin-6B C(15)-methyltransferase (decarboxylating) (196 aa).

Residues Thr24, 48–52 (GCGTG), Asp72, and Ala101 contribute to the S-adenosyl-L-methionine site.

It belongs to the methyltransferase superfamily. Archaeal-type CbiT family.

The catalysed reaction is Co-precorrin-6B + S-adenosyl-L-methionine = Co-precorrin-7 + S-adenosyl-L-homocysteine + CO2. It functions in the pathway cofactor biosynthesis; adenosylcobalamin biosynthesis; cob(II)yrinate a,c-diamide from sirohydrochlorin (anaerobic route): step 8/10. Catalyzes the methylation of C-15 in cobalt-precorrin-6B followed by the decarboxylation of C-12 to form cobalt-precorrin-7. This chain is Probable cobalt-precorrin-6B C(15)-methyltransferase (decarboxylating), found in Pyrobaculum aerophilum (strain ATCC 51768 / DSM 7523 / JCM 9630 / CIP 104966 / NBRC 100827 / IM2).